The sequence spans 542 residues: Calcium/calmodulin-dependent protein kinase type II subunit beta (542 aa).

Residues 14-272 form the Protein kinase domain; that stretch reads YQLYEDIGKG…AHEALKHPWV (259 aa). Residue Tyr-17 is modified to Phosphotyrosine. ATP contacts are provided by residues 20–28 and Lys-43; that span reads IGKGAFSVV. Asp-136 functions as the Proton acceptor in the catalytic mechanism. The autoinhibitory domain stretch occupies residues 283–292; it reads HRQETVECLK. A Phosphothreonine; by autocatalysis modification is found at Thr-287. Residues 291–301 form a calmodulin-binding region; the sequence is LKKFNARRKLK. Phosphothreonine; by autocatalysis is present on residues Thr-306 and Thr-307. A disordered region spans residues 349–376; sequence ADGVKPQTNSTKNSSAITSPKGSLPPAA. Residues 354-369 show a composition bias toward polar residues; the sequence is PQTNSTKNSSAITSPK. Residues Ser-367, Ser-371, Ser-394, and Ser-397 each carry the phosphoserine modification. 2 positions are modified to phosphothreonine: Thr-400 and Thr-401.

It belongs to the protein kinase superfamily. CAMK Ser/Thr protein kinase family. CaMK subfamily. CAMK2 is composed of 4 different chains: alpha (CAMK2A), beta (CAMK2B), gamma (CAMK2G), and delta (CAMK2D). The different isoforms assemble into homo- or heteromultimeric holoenzymes composed of 12 subunits with two hexameric rings stacked one on top of the other. Interacts with SYNGAP1, CAMK2N2 and MPDZ. Interacts with FOXO3. Interacts (when in a kinase inactive state not associated with calmodulin) with ARC; leading to target ARC to inactive synapses. Interacts with CAMK2N1; this interaction requires CAMK2B activation by Ca(2+). Autophosphorylation of Thr-287 following activation by Ca(2+)/calmodulin. Phosphorylation of Thr-287 locks the kinase into an activated state.

Its subcellular location is the cytoplasm. The protein localises to the cytoskeleton. It localises to the microtubule organizing center. The protein resides in the centrosome. It is found in the sarcoplasmic reticulum membrane. Its subcellular location is the synapse. The catalysed reaction is L-seryl-[protein] + ATP = O-phospho-L-seryl-[protein] + ADP + H(+). The enzyme catalyses L-threonyl-[protein] + ATP = O-phospho-L-threonyl-[protein] + ADP + H(+). With respect to regulation, activated by Ca(2+)/calmodulin. Binding of calmodulin results in conformational change that relieves intrasteric autoinhibition and allows autophosphorylation of Thr-287 which turns the kinase in a constitutively active form and confers to the kinase a Ca(2+)-independent activity. In terms of biological role, calcium/calmodulin-dependent protein kinase that functions autonomously after Ca(2+)/calmodulin-binding and autophosphorylation, and is involved in dendritic spine and synapse formation, neuronal plasticity and regulation of sarcoplasmic reticulum Ca(2+) transport in skeletal muscle. In neurons, plays an essential structural role in the reorganization of the actin cytoskeleton during plasticity by binding and bundling actin filaments in a kinase-independent manner. This structural function is required for correct targeting of CaMK2A, which acts downstream of NMDAR to promote dendritic spine and synapse formation and maintain synaptic plasticity which enables long-term potentiation (LTP) and hippocampus-dependent learning. In developing hippocampal neurons, promotes arborization of the dendritic tree and in mature neurons, promotes dendritic remodeling. Also regulates the migration of developing neurons. Participates in the modulation of skeletal muscle function in response to exercise. In slow-twitch muscles, is involved in regulation of sarcoplasmic reticulum (SR) Ca(2+) transport and in fast-twitch muscle participates in the control of Ca(2+) release from the SR through phosphorylation of triadin, a ryanodine receptor-coupling factor, and phospholamban (PLN/PLB), an endogenous inhibitor of SERCA2A/ATP2A2. In response to interferon-gamma (IFN-gamma) stimulation, catalyzes phosphorylation of STAT1, stimulating the JAK-STAT signaling pathway. Phosphorylates reticulophagy regulator RETREG1 at 'Thr-134' under endoplasmic reticulum stress conditions which enhances RETREG1 oligomerization and its membrane scission and reticulophagy activity. This Mus musculus (Mouse) protein is Calcium/calmodulin-dependent protein kinase type II subunit beta (Camk2b).